We begin with the raw amino-acid sequence, 194 residues long: MNIEKAKRLAKEKLPEKRYNHSLRVAETAIKLAEIYDGDTSKVELAGVLHDFCKYDDLGKMYQIVRQYELGNDLLSYGSEILHGPVCAAIMEHEYGINDEEVLMAIKYHTTGRQQMTKTEKLIFIADYIEPGRTIPGVDDIRDMAYNQGSLDKTIYEISKRTVLFLIQKDITVYNKTIDCLNYYNYSDERIKDD.

The HD domain maps to 18–132; that stretch reads RYNHSLRVAE…IFIADYIEPG (115 aa). H21 contacts ADP. H21, H50, and D51 together coordinate Fe cation. ADP is bound by residues 51-54, H83, 109-110, D127, R133, and 172-177; these read DFCK, HT, and TVYNKT. Residue D127 coordinates Fe cation.

This sequence belongs to the Ap4A hydrolase YqeK family. In terms of assembly, homodimer.

The enzyme catalyses P(1),P(4)-bis(5'-adenosyl) tetraphosphate + H2O = 2 ADP + 2 H(+). Inhibited by EDTA. Functionally, hydrolyzes diadenosine 5',5'''-P1,P4-tetraphosphate (Ap4A) to yield ADP. Can also hydrolyze Ap3A, Ap5A, Ap4G, Ap4U and Gp4G, always releasing ADP or GDP as one of the products, but it exhibits a marked preference for Ap4A, which is mainly exerted at the substrate affinity level. This is Bis(5'-nucleosyl)-tetraphosphatase, symmetrical from Staphylococcus aureus (strain NCTC 8325 / PS 47).